The following is a 333-amino-acid chain: Probable pyridoxal reductase 2 (333 aa).

Residue tyrosine 52 is the Proton donor of the active site.

The protein belongs to the aldo/keto reductase family.

The protein resides in the cytoplasm. The enzyme catalyses pyridoxine + NADP(+) = pyridoxal + NADPH + H(+). Catalyzes the reduction of pyridoxal (PL) with NADPH and oxidation of pyridoxine (PN) with NADP(+). The protein is Probable pyridoxal reductase 2 of Schizosaccharomyces pombe (strain 972 / ATCC 24843) (Fission yeast).